A 475-amino-acid chain; its full sequence is MAEAATRSVGKVTQVIGAVVDVAFEGELPAILNALETDNNGNRLVLEVAQHLGENEVRTIAMDSSEGLVRGQQVIDTGAPISVPVGDETLGRIMNVIGEPVDEAGPLNTAHKRAIHQDAPAYVEQSTEAQILVTGIKVVDLLAPYARGGKIGLFGGAGVGKTVLIMELINNVAKAHGGYSVFAGVGERTREGNDLYHEMIESGVNKHGGGEGSKAALVYGQMNEPPGARARVALTGLTVAEHFRDQGQDVLFFVDNIFRFTQAGSEVSALLGRIPSAVGYQPTLATDMGQMQERITTTTTGSITSVQAIYVPADDLTDPAPATSFAHLDATTVLSRSIAEKGIYPAVDPLDSTSRMLDPMVVGEEHYEVARKVQSTLQRYKALQDIIAILGMDELSEEDKLAVARARKIERFLSQPFFVAEVFTGSPGKLVALEDTIKGFKGLVNGEYDNLPEAAFYMVGSIDEAIEKAKKLAAA.

An ATP-binding site is contributed by 155-162 (GGAGVGKT).

Belongs to the ATPase alpha/beta chains family. F-type ATPases have 2 components, CF(1) - the catalytic core - and CF(0) - the membrane proton channel. CF(1) has five subunits: alpha(3), beta(3), gamma(1), delta(1), epsilon(1). CF(0) has three main subunits: a(1), b(2) and c(9-12). The alpha and beta chains form an alternating ring which encloses part of the gamma chain. CF(1) is attached to CF(0) by a central stalk formed by the gamma and epsilon chains, while a peripheral stalk is formed by the delta and b chains.

Its subcellular location is the cell inner membrane. The catalysed reaction is ATP + H2O + 4 H(+)(in) = ADP + phosphate + 5 H(+)(out). Its function is as follows. Produces ATP from ADP in the presence of a proton gradient across the membrane. The catalytic sites are hosted primarily by the beta subunits. In Rhizobium etli (strain CIAT 652), this protein is ATP synthase subunit beta.